The primary structure comprises 261 residues: Synaptophysin-like protein 1 (261 aa).

The Cytoplasmic segment spans residues 1-33 (MASKANMVRQRFSRLSQRMSAFQINLNPLKEPL). The MARVEL domain maps to 28 to 239 (PLKEPLGFIK…NAWFVYKETS (212 aa)). A helical transmembrane segment spans residues 34 to 54 (GFIKILEWFASIFAFATCGGF). Topologically, residues 55-117 (KGKTEIQVNC…LIGDYSSSAQ (63 aa)) are vesicular. N72 and N95 each carry an N-linked (GlcNAc...) asparagine glycan. Residues 118–138 (FYVTFAVFVFLYCIAALLLYV) form a helical membrane-spanning segment. Residues 139–151 (GYTNLYRDSRKLP) are Cytoplasmic-facing. The helical transmembrane segment at 152 to 172 (MIDFIVTLVATFLWLVSSSAW) threads the bilayer. Residues 173–214 (AKALTDIKVATGHRIVEELEICNPESGVSCYFVSVTSMGSLN) lie on the Vesicular side of the membrane. N214 carries an N-linked (GlcNAc...) asparagine glycan. Residues 215–235 (VSVIFGFLNMILWGGNAWFVY) form a helical membrane-spanning segment. Over 236–261 (KETSLHSPSNTSASHSQGGGPPTSGM) the chain is Cytoplasmic. Polar residues predominate over residues 241–251 (HSPSNTSASHS). The disordered stretch occupies residues 241–261 (HSPSNTSASHSQGGGPPTSGM). The segment covering 252–261 (QGGGPPTSGM) has biased composition (gly residues).

Belongs to the synaptophysin/synaptobrevin family. As to expression, ubiquitously expressed.

It is found in the cytoplasmic vesicle membrane. Its subcellular location is the melanosome. The protein is Synaptophysin-like protein 1 (Sypl1) of Mus musculus (Mouse).